Reading from the N-terminus, the 499-residue chain is Cytosol aminopeptidase (499 aa).

Mn(2+) contacts are provided by Lys-267 and Asp-272. The active site involves Lys-279. Residues Asp-290, Asp-349, and Glu-351 each contribute to the Mn(2+) site. The active site involves Arg-353.

Belongs to the peptidase M17 family. Mn(2+) serves as cofactor.

It is found in the cytoplasm. The enzyme catalyses Release of an N-terminal amino acid, Xaa-|-Yaa-, in which Xaa is preferably Leu, but may be other amino acids including Pro although not Arg or Lys, and Yaa may be Pro. Amino acid amides and methyl esters are also readily hydrolyzed, but rates on arylamides are exceedingly low.. It catalyses the reaction Release of an N-terminal amino acid, preferentially leucine, but not glutamic or aspartic acids.. Presumably involved in the processing and regular turnover of intracellular proteins. Catalyzes the removal of unsubstituted N-terminal amino acids from various peptides. This Buchnera aphidicola subsp. Acyrthosiphon pisum (strain APS) (Acyrthosiphon pisum symbiotic bacterium) protein is Cytosol aminopeptidase (pepA).